The following is a 542-amino-acid chain: Chaperonin GroEL 1 (542 aa).

ATP contacts are provided by residues 29–32, 86–90, Gly415, 479–481, and Asp495; these read TIGP, DGTTT, and NAA.

It belongs to the chaperonin (HSP60) family. In terms of assembly, forms a cylinder of 14 subunits composed of two heptameric rings stacked back-to-back. Interacts with the co-chaperonin GroES.

It localises to the cytoplasm. The catalysed reaction is ATP + H2O + a folded polypeptide = ADP + phosphate + an unfolded polypeptide.. Together with its co-chaperonin GroES, plays an essential role in assisting protein folding. The GroEL-GroES system forms a nano-cage that allows encapsulation of the non-native substrate proteins and provides a physical environment optimized to promote and accelerate protein folding. The chain is Chaperonin GroEL 1 from Streptomyces avermitilis (strain ATCC 31267 / DSM 46492 / JCM 5070 / NBRC 14893 / NCIMB 12804 / NRRL 8165 / MA-4680).